The sequence spans 190 residues: Shikimate kinase (190 aa).

An ATP-binding site is contributed by 14–19 (GSGKST). S18 lines the Mg(2+) pocket. Positions 36, 60, and 82 each coordinate substrate. R120 lines the ATP pocket. R147 contributes to the substrate binding site.

The protein belongs to the shikimate kinase family. In terms of assembly, monomer. Requires Mg(2+) as cofactor.

The protein localises to the cytoplasm. The catalysed reaction is shikimate + ATP = 3-phosphoshikimate + ADP + H(+). It participates in metabolic intermediate biosynthesis; chorismate biosynthesis; chorismate from D-erythrose 4-phosphate and phosphoenolpyruvate: step 5/7. Catalyzes the specific phosphorylation of the 3-hydroxyl group of shikimic acid using ATP as a cosubstrate. This Chlorobium phaeobacteroides (strain DSM 266 / SMG 266 / 2430) protein is Shikimate kinase.